The chain runs to 283 residues: Bifunctional protein FolD (283 aa).

NADP(+) contacts are provided by residues glycine 166–serine 168, serine 191, and isoleucine 232.

It belongs to the tetrahydrofolate dehydrogenase/cyclohydrolase family. In terms of assembly, homodimer.

The catalysed reaction is (6R)-5,10-methylene-5,6,7,8-tetrahydrofolate + NADP(+) = (6R)-5,10-methenyltetrahydrofolate + NADPH. The enzyme catalyses (6R)-5,10-methenyltetrahydrofolate + H2O = (6R)-10-formyltetrahydrofolate + H(+). The protein operates within one-carbon metabolism; tetrahydrofolate interconversion. Its function is as follows. Catalyzes the oxidation of 5,10-methylenetetrahydrofolate to 5,10-methenyltetrahydrofolate and then the hydrolysis of 5,10-methenyltetrahydrofolate to 10-formyltetrahydrofolate. In Rickettsia bellii (strain RML369-C), this protein is Bifunctional protein FolD.